The chain runs to 416 residues: CapZ-interacting protein (416 aa).

2 disordered regions span residues Met1–Pro84 and Ala98–Met416. The segment covering Thr8–Val20 has biased composition (polar residues). Residue Ser17 is modified to Phosphoserine. Ser68 is modified (phosphoserine; by MAPK8; in vitro). Ser82 is modified (phosphoserine). Ser83 is subject to Phosphoserine; by MAPK8; in vitro. Phosphoserine is present on Ser105. Ser108 carries the phosphoserine; by MAPK12 and MAPK13 modification. Ser116, Ser120, and Ser123 each carry phosphoserine. Position 124 is a phosphothreonine (Thr124). Phosphoserine is present on residues Ser126, Ser127, Ser135, and Ser143. Positions Val159 to Arg176 are enriched in basic residues. The residue at position 177 (Ser177) is a Phosphoserine. A Phosphoserine; by MAPKAPK2 and MAPKAPK3 modification is found at Ser179. Ser216 carries the post-translational modification Phosphoserine; by MAPK8; in vitro. The region spanning Gly227–Glu330 is the RCSD domain. A Phosphoserine; by MAPKAPK2 or MAPKAPK3; in vitro modification is found at Ser244. Basic and acidic residues predominate over residues Ser244 to Gly273. A phosphoserine mark is found at Ser267, Ser268, Ser284, Ser298, and Ser333. The segment covering Ala292 to Pro349 has biased composition (basic and acidic residues). Thr336 carries the post-translational modification Phosphothreonine. Residue Ser351 is modified to Phosphoserine. Over residues Asp360–Gln372 the composition is skewed to basic and acidic residues. Positions Ser382 to Gln397 are enriched in polar residues.

Interacts with CAPZA2 and CAPZB. Post-translationally, dephosphorylation results in its dissociation from CAPZA2. In terms of tissue distribution, highly expressed in skeletal muscle and more weakly in cardiac muscle. Also expressed in several lymphoid organs, including spleen, thymus, peripheral blood leukocytes, lymph node and bone marrow.

Its function is as follows. Stress-induced phosphorylation of CAPZIP may regulate the ability of F-actin-capping protein to remodel actin filament assembly. The protein is CapZ-interacting protein (RCSD1) of Homo sapiens (Human).